Here is a 489-residue protein sequence, read N- to C-terminus: Probable 26S proteasome non-ATPase regulatory subunit 3 (489 aa).

Residues 1 to 23 form a disordered region; the sequence is MTQDVEMKEVPAPAPSNSVTAAT. Residues 241–422 form the PCI domain; the sequence is CRYLFYLGKI…GWMVSKETGD (182 aa). A disordered region spans residues 454 to 489; that stretch reads PANSHKDKESAEKRRERQQQEQELAKHIAEEDDDEF. A compositionally biased stretch (basic and acidic residues) spans 457–482; the sequence is SHKDKESAEKRRERQQQEQELAKHIA.

The protein belongs to the proteasome subunit S3 family. As to quaternary structure, the 26S proteasome is composed of a core protease, known as the 20S proteasome, capped at one or both ends by the 19S regulatory complex (RC). The RC is composed of at least 18 different subunits in two subcomplexes, the base and the lid, which form the portions proximal and distal to the 20S proteolytic core, respectively.

The protein localises to the nucleus. Functionally, acts as a regulatory subunit of the 26 proteasome which is involved in the ATP-dependent degradation of ubiquitinated proteins. The chain is Probable 26S proteasome non-ATPase regulatory subunit 3 (21D7) from Daucus carota (Wild carrot).